We begin with the raw amino-acid sequence, 239 residues long: 1-(5-phosphoribosyl)-5-[(5-phosphoribosylamino)methylideneamino] imidazole-4-carboxamide isomerase (239 aa).

Asp8 serves as the catalytic Proton acceptor. Catalysis depends on Asp129, which acts as the Proton donor.

It belongs to the HisA/HisF family.

The protein resides in the cytoplasm. It catalyses the reaction 1-(5-phospho-beta-D-ribosyl)-5-[(5-phospho-beta-D-ribosylamino)methylideneamino]imidazole-4-carboxamide = 5-[(5-phospho-1-deoxy-D-ribulos-1-ylimino)methylamino]-1-(5-phospho-beta-D-ribosyl)imidazole-4-carboxamide. Its pathway is amino-acid biosynthesis; L-histidine biosynthesis; L-histidine from 5-phospho-alpha-D-ribose 1-diphosphate: step 4/9. In Legionella pneumophila subsp. pneumophila (strain Philadelphia 1 / ATCC 33152 / DSM 7513), this protein is 1-(5-phosphoribosyl)-5-[(5-phosphoribosylamino)methylideneamino] imidazole-4-carboxamide isomerase.